The sequence spans 762 residues: Endothelin-converting enzyme 1 (762 aa).

The Cytoplasmic segment spans residues 1 to 60 (MGSLRPPQGLGLQWSSFFLGKKGPGLTVSLPLLASSLQVNFRSPRSGQRCWAARTSVEKR). A helical; Signal-anchor for type II membrane protein transmembrane segment spans residues 61–81 (LVVLVTLLAAGLVACLAALGI). Topologically, residues 82–762 (QYRTRTPPVC…MNPRHKCEVW (681 aa)) are extracellular. Residues 90–762 (VCLTEACVSV…MNPRHKCEVW (673 aa)) enclose the Peptidase M13 domain. 5 cysteine pairs are disulfide-bonded: C91/C96, C114/C747, C122/C707, C177/C427, and C636/C759. 8 N-linked (GlcNAc...) asparagine glycosylation sites follow: N158, N179, N202, N262, N308, N354, N375, and N531. Residue H599 participates in Zn(2+) binding. E600 is an active-site residue. A Zn(2+)-binding site is contributed by H603. Residues N624 and N643 are each glycosylated (N-linked (GlcNAc...) asparagine). Residue E659 coordinates Zn(2+). D663 serves as the catalytic Proton donor.

Belongs to the peptidase M13 family. As to quaternary structure, homodimer; disulfide-linked. Interacts with PPP1R16B. Interacts with TSPAN8; this interaction recruits the endothelin converting enzyme ECE1 to tetraspanin-enriched microdomains and positively modulates its enzymatic activity. Zn(2+) is required as a cofactor. As to expression, all isoforms are expressed in aortic endothelial cells. Isoform A is also expressed in liver; isoform B in smooth muscle cells and fibroblasts; isoform C in aortic endothelial cells, smooth muscle cells, fibroblasts, liver and lung, and isoform D in smooth muscle cells.

It localises to the cell membrane. It carries out the reaction Hydrolysis of the 21-Trp-|-Val-22 bond in big endothelin to form endothelin 1.. With respect to regulation, inhibited by phosphoramidon. Converts big endothelin-1 to endothelin-1. In Rattus norvegicus (Rat), this protein is Endothelin-converting enzyme 1 (Ece1).